The following is a 226-amino-acid chain: Phosphoribosylformylglycinamidine synthase subunit PurQ (226 aa).

Positions Phe-3 to Tyr-225 constitute a Glutamine amidotransferase type-1 domain. The active-site Nucleophile is Cys-86. Catalysis depends on residues His-194 and Glu-196.

As to quaternary structure, part of the FGAM synthase complex composed of 1 PurL, 1 PurQ and 2 PurS subunits.

Its subcellular location is the cytoplasm. It catalyses the reaction N(2)-formyl-N(1)-(5-phospho-beta-D-ribosyl)glycinamide + L-glutamine + ATP + H2O = 2-formamido-N(1)-(5-O-phospho-beta-D-ribosyl)acetamidine + L-glutamate + ADP + phosphate + H(+). The catalysed reaction is L-glutamine + H2O = L-glutamate + NH4(+). It participates in purine metabolism; IMP biosynthesis via de novo pathway; 5-amino-1-(5-phospho-D-ribosyl)imidazole from N(2)-formyl-N(1)-(5-phospho-D-ribosyl)glycinamide: step 1/2. Functionally, part of the phosphoribosylformylglycinamidine synthase complex involved in the purines biosynthetic pathway. Catalyzes the ATP-dependent conversion of formylglycinamide ribonucleotide (FGAR) and glutamine to yield formylglycinamidine ribonucleotide (FGAM) and glutamate. The FGAM synthase complex is composed of three subunits. PurQ produces an ammonia molecule by converting glutamine to glutamate. PurL transfers the ammonia molecule to FGAR to form FGAM in an ATP-dependent manner. PurS interacts with PurQ and PurL and is thought to assist in the transfer of the ammonia molecule from PurQ to PurL. This is Phosphoribosylformylglycinamidine synthase subunit PurQ from Exiguobacterium sp. (strain ATCC BAA-1283 / AT1b).